The following is a 338-amino-acid chain: Ornithine carbamoyltransferase, catabolic (338 aa).

Carbamoyl phosphate-binding positions include 58-61 (STRT), Gln85, Arg109, and 136-139 (HPTQ). L-ornithine contacts are provided by residues Asn168, Asp232, and 236–237 (SM). Residues 273-274 (CL) and Arg318 contribute to the carbamoyl phosphate site.

The protein belongs to the aspartate/ornithine carbamoyltransferase superfamily. OTCase family.

The protein localises to the cytoplasm. It catalyses the reaction carbamoyl phosphate + L-ornithine = L-citrulline + phosphate + H(+). The protein operates within amino-acid degradation; L-arginine degradation via ADI pathway; carbamoyl phosphate from L-arginine: step 2/2. Functionally, reversibly catalyzes the transfer of the carbamoyl group from carbamoyl phosphate (CP) to the N(epsilon) atom of ornithine (ORN) to produce L-citrulline. The protein is Ornithine carbamoyltransferase, catabolic of Streptococcus gordonii (strain Challis / ATCC 35105 / BCRC 15272 / CH1 / DL1 / V288).